Consider the following 261-residue polypeptide: Hydroxyethylthiazole kinase (261 aa).

Residue Met-45 participates in substrate binding. Arg-121 and Ser-167 together coordinate ATP. Gly-194 contributes to the substrate binding site.

Belongs to the Thz kinase family. Mg(2+) is required as a cofactor.

It catalyses the reaction 5-(2-hydroxyethyl)-4-methylthiazole + ATP = 4-methyl-5-(2-phosphooxyethyl)-thiazole + ADP + H(+). The protein operates within cofactor biosynthesis; thiamine diphosphate biosynthesis; 4-methyl-5-(2-phosphoethyl)-thiazole from 5-(2-hydroxyethyl)-4-methylthiazole: step 1/1. Functionally, catalyzes the phosphorylation of the hydroxyl group of 4-methyl-5-beta-hydroxyethylthiazole (THZ). In Vibrio atlanticus (strain LGP32) (Vibrio splendidus (strain Mel32)), this protein is Hydroxyethylthiazole kinase.